A 345-amino-acid polypeptide reads, in one-letter code: S-adenosylmethionine:tRNA ribosyltransferase-isomerase (345 aa).

Belongs to the QueA family. In terms of assembly, monomer.

It localises to the cytoplasm. It catalyses the reaction 7-aminomethyl-7-carbaguanosine(34) in tRNA + S-adenosyl-L-methionine = epoxyqueuosine(34) in tRNA + adenine + L-methionine + 2 H(+). Its pathway is tRNA modification; tRNA-queuosine biosynthesis. Transfers and isomerizes the ribose moiety from AdoMet to the 7-aminomethyl group of 7-deazaguanine (preQ1-tRNA) to give epoxyqueuosine (oQ-tRNA). This chain is S-adenosylmethionine:tRNA ribosyltransferase-isomerase, found in Shewanella putrefaciens (strain CN-32 / ATCC BAA-453).